The following is an 899-amino-acid chain: RNA-binding motif protein 25 (899 aa).

A compositionally biased stretch (polar residues) spans 1–20 (MADESSSPATGDPNSQKPES). Positions 1 to 112 (MADESSSPAT…SMPQYQPQPG (112 aa)) are disordered. The span at 26 to 63 (IPNPNPNPSLTPPPPQQHSQPPVAPLVPPGPPYAPPAQ) shows a compositional bias: pro residues. Residues 204-281 (TTIYIGKIAT…QELLVNVNQA (78 aa)) enclose the RRM domain. 2 disordered regions span residues 298–572 (KKAK…EQNL) and 611–778 (GESA…KESG). 2 stretches are compositionally biased toward basic and acidic residues: residues 317-340 (EQDK…KENI) and 354-372 (EADR…ERLK). Positions 375–384 (PLPPPPPPPA) are enriched in pro residues. The segment covering 430-505 (WSKRNDRRSR…QYEKEKEKEK (76 aa)) has biased composition (basic and acidic residues). Residues 434 to 578 (NDRRSRERGE…EQNLQQQQLD (145 aa)) are a coiled coil. Over residues 515-524 (YEEEEEEDDD) the composition is skewed to acidic residues. Residues 526 to 533 (SRRRWHRA) carry the Nuclear localization signal 1 motif. The segment covering 533–568 (AALDERRRRQLREKEDDLADRLKEEEEVAEAKRSAE) has biased composition (basic and acidic residues). A compositionally biased stretch (polar residues) spans 626-640 (GSGNESMAIDNNSGS). 2 stretches are compositionally biased toward basic and acidic residues: residues 723 to 733 (PKEETIETEKQ) and 740 to 778 (DKAS…KESG). The Nuclear localization signal 2 motif lies at 735–742 (SRRSHDKA). The PWI domain maps to 802–899 (EDLFSYEINW…EAGVPVKSKA (98 aa)).

Specifically associates with functional splicing complexes. Associates with exon junction complex (EJC) proteins. In terms of processing, phosphorylated; the phosphorylation level is repressed by abscisic acid (ABA).

It is found in the nucleus. Its function is as follows. RNA-binding protein that acts as a regulator of alternative pre-mRNA splicing. Negative regulator of responses to abscisic acid (ABA), including in early development. The chain is RNA-binding motif protein 25 from Arabidopsis thaliana (Mouse-ear cress).